Reading from the N-terminus, the 464-residue chain is Clusterin-like protein 1 (464 aa).

Residues 1–20 (MQPPLFVISVYLLWLKYCDS) form the signal peptide. A coiled-coil region spans residues 56–109 (IKQMKIMMERREEEHAKLMKALKKCKEEKQEAQKLMNEVQERLEEEEKLCQASS). 5 disulfides stabilise this stretch: cysteine 105-cysteine 331, cysteine 116-cysteine 323, cysteine 119-cysteine 320, cysteine 124-cysteine 313, and cysteine 131-cysteine 303. N-linked (GlcNAc...) asparagine glycosylation is found at asparagine 195, asparagine 255, asparagine 309, asparagine 349, asparagine 398, and asparagine 429.

It belongs to the clusterin family.

The protein localises to the secreted. In Rattus norvegicus (Rat), this protein is Clusterin-like protein 1.